The primary structure comprises 106 residues: Iron-sulfur cluster assembly protein CyaY (106 aa).

This sequence belongs to the frataxin family.

Involved in iron-sulfur (Fe-S) cluster assembly. May act as a regulator of Fe-S biogenesis. The protein is Iron-sulfur cluster assembly protein CyaY of Salmonella agona (strain SL483).